A 158-amino-acid chain; its full sequence is Transcription elongation factor GreA (158 aa).

A coiled-coil region spans residues 45-73 (AEYHAAREQQSFIEGRIKQLESELSHAEI).

It belongs to the GreA/GreB family.

In terms of biological role, necessary for efficient RNA polymerase transcription elongation past template-encoded arresting sites. The arresting sites in DNA have the property of trapping a certain fraction of elongating RNA polymerases that pass through, resulting in locked ternary complexes. Cleavage of the nascent transcript by cleavage factors such as GreA or GreB allows the resumption of elongation from the new 3'terminus. GreA releases sequences of 2 to 3 nucleotides. The sequence is that of Transcription elongation factor GreA from Xanthomonas axonopodis pv. citri (strain 306).